A 239-amino-acid chain; its full sequence is Serine protease SplC (239 aa).

A signal peptide spans 1-36 (MNKNIVIKSMAALAILTSATGINAAVVEETQQIANA). Residues histidine 75, aspartate 113, and serine 193 each act as charge relay system in the active site.

Belongs to the peptidase S1B family.

Its subcellular location is the secreted. In Staphylococcus aureus (strain MSSA476), this protein is Serine protease SplC (splC).